The sequence spans 1520 residues: Accessory colonization factor AcfD (1520 aa).

The N-terminal stretch at 1–16 (MKIRIVSLIVLGFLIG) is a signal peptide. Residue Cys-17 is the site of N-palmitoyl cysteine attachment. The S-diacylglycerol cysteine moiety is linked to residue Cys-17. The region spanning 1085–1388 (GNRQPTGQWA…MFAQLKEWAE (304 aa)) is the Peptidase M60 domain.

It is found in the cell membrane. In Vibrio cholerae serotype O1 (strain ATCC 39315 / El Tor Inaba N16961), this protein is Accessory colonization factor AcfD (acfD).